We begin with the raw amino-acid sequence, 95 residues long: Large ribosomal subunit protein bL25 (95 aa).

The protein belongs to the bacterial ribosomal protein bL25 family. Part of the 50S ribosomal subunit; part of the 5S rRNA/L5/L18/L25 subcomplex. Contacts the 5S rRNA. Binds to the 5S rRNA independently of L5 and L18.

In terms of biological role, this is one of the proteins that binds to the 5S RNA in the ribosome where it forms part of the central protuberance. In Shewanella putrefaciens (strain CN-32 / ATCC BAA-453), this protein is Large ribosomal subunit protein bL25.